Consider the following 564-residue polypeptide: Dihydroxy-acid dehydratase (564 aa).

Residue cysteine 55 participates in [2Fe-2S] cluster binding. Residue aspartate 87 coordinates Mg(2+). Residue cysteine 128 coordinates [2Fe-2S] cluster. 2 residues coordinate Mg(2+): aspartate 129 and lysine 130. N6-carboxylysine is present on lysine 130. A [2Fe-2S] cluster-binding site is contributed by cysteine 200. Glutamate 452 is a binding site for Mg(2+). Serine 478 serves as the catalytic Proton acceptor.

It belongs to the IlvD/Edd family. As to quaternary structure, homodimer. [2Fe-2S] cluster serves as cofactor. The cofactor is Mg(2+).

It carries out the reaction (2R)-2,3-dihydroxy-3-methylbutanoate = 3-methyl-2-oxobutanoate + H2O. It catalyses the reaction (2R,3R)-2,3-dihydroxy-3-methylpentanoate = (S)-3-methyl-2-oxopentanoate + H2O. It functions in the pathway amino-acid biosynthesis; L-isoleucine biosynthesis; L-isoleucine from 2-oxobutanoate: step 3/4. Its pathway is amino-acid biosynthesis; L-valine biosynthesis; L-valine from pyruvate: step 3/4. Its function is as follows. Functions in the biosynthesis of branched-chain amino acids. Catalyzes the dehydration of (2R,3R)-2,3-dihydroxy-3-methylpentanoate (2,3-dihydroxy-3-methylvalerate) into 2-oxo-3-methylpentanoate (2-oxo-3-methylvalerate) and of (2R)-2,3-dihydroxy-3-methylbutanoate (2,3-dihydroxyisovalerate) into 2-oxo-3-methylbutanoate (2-oxoisovalerate), the penultimate precursor to L-isoleucine and L-valine, respectively. The polypeptide is Dihydroxy-acid dehydratase (Polaromonas naphthalenivorans (strain CJ2)).